The chain runs to 288 residues: Acidic endochitinase SP2 (288 aa).

Residues 1-27 (MTLLLKNTLYLALIISVISSFPTSLFA) form the signal peptide. At Q28 the chain carries Pyrrolidone carboxylic acid. Residues 28–63 (QNCGCAPNLCCSNFGFCGTGTPYCGVGNCQSGPCEG) form the Chitin-binding type-1 domain. Disulfide bonds link C30–C38, C32–C44, C37–C51, and C56–C61. Residues 64–78 (GTPTTPTTPTTPTTP) show a composition bias toward low complexity. The disordered stretch occupies residues 64-84 (GTPTTPTTPTTPTTPGTGGGG). Residues 64–85 (GTPTTPTTPTTPTTPGTGGGGS) form a hinge region (Gly/Pro/Thr-rich) region. P66, P69, P72, and P75 each carry 4-hydroxyproline. 4 repeat units span residues 67–69 (TTP), 70–72 (TTP), 73–75 (TTP), and 76–78 (TTP). The interval 67–78 (TTPTTPTTPTTP) is 4 X 3 AA tandem repeats of T-T-P. Positions 86-288 (SVSDIVSQAF…GVAPGDNLTC (203 aa)) are catalytic. 3 cysteine pairs are disulfide-bonded: C107/C154, C168/C178, and C256/C288. The Proton donor role is filled by E149.

The protein belongs to the glycosyl hydrolase 19 family. Chitinase class I subfamily. O-glycosylated on hydroxyprolines; contains xylose. Localized to infected area.

Its subcellular location is the secreted. It is found in the extracellular space. It catalyses the reaction Random endo-hydrolysis of N-acetyl-beta-D-glucosaminide (1-&gt;4)-beta-linkages in chitin and chitodextrins.. In terms of biological role, defense against chitin-containing fungal pathogens. This Beta vulgaris (Sugar beet) protein is Acidic endochitinase SP2 (SP2).